The sequence spans 429 residues: Growth/differentiation factor 2 (429 aa).

Residues 1–22 form the signal peptide; it reads MCPGALWVALPLLSLLAGSLQG. A propeptide spanning residues 23-319 is cleaved from the precursor; it reads KPLQSWGRGS…AGSTLARRKR (297 aa). Asn71 and Asn136 each carry an N-linked (GlcNAc...) asparagine glycan. Over residues 283–301 the composition is skewed to basic and acidic residues; that stretch reads VLKKLSKDGSTEAGESSHE. The segment at 283 to 308 is disordered; the sequence is VLKKLSKDGSTEAGESSHEEDTDGHV. Intrachain disulfides connect Cys327/Cys393, Cys356/Cys426, and Cys360/Cys428. Residues 402–416 form an interaction with ENG region; the sequence is SVLYKDDMGVPTLKY.

This sequence belongs to the TGF-beta family. Homodimer; disulfide-linked. Detected in extracellular fluid as mature homodimer, and in complex with its propeptide. Interacts with ACVRL1, BMPR2 and ACVR2B with high affinity (in vitro). Identified in a complex with ACVRL1 and ACVR2B. Has ten times lower affinity for ACVR2A (in vitro). Interacts with ENG, forming a heterotetramer with a 2:2 stoichiometry. Can form a heteromeric complex with ENG and ACVRL1. Interacts with type I receptor ACVR1. Post-translationally, a reversible disulfide bond can be formed between the two subunits in the homodimer; this has no effect on GDF2 activity. As to expression, detected in blood plasma (at protein level).

Its subcellular location is the secreted. In terms of biological role, potent circulating inhibitor of angiogenesis. Signals through the type I activin receptor ACVRL1 but not other Alks. Signaling through SMAD1 in endothelial cells requires TGF-beta coreceptor endoglin/ENG. This is Growth/differentiation factor 2 (GDF2) from Homo sapiens (Human).